Consider the following 312-residue polypeptide: Urease accessory protein UreD (312 aa).

The tract at residues 1–50 (MRPLAPDARCAPSRPGRGPWYARRPVTTPSDPPAALREPPPPARRAGKAG) is disordered.

Belongs to the UreD family. As to quaternary structure, ureD, UreF and UreG form a complex that acts as a GTP-hydrolysis-dependent molecular chaperone, activating the urease apoprotein by helping to assemble the nickel containing metallocenter of UreC. The UreE protein probably delivers the nickel.

It is found in the cytoplasm. Its function is as follows. Required for maturation of urease via the functional incorporation of the urease nickel metallocenter. The chain is Urease accessory protein UreD from Sorangium cellulosum (strain So ce56) (Polyangium cellulosum (strain So ce56)).